The sequence spans 447 residues: UDP-N-acetylmuramate--L-alanine ligase (447 aa).

An ATP-binding site is contributed by 108 to 114; sequence GSHGKTS.

Belongs to the MurCDEF family.

It is found in the cytoplasm. It catalyses the reaction UDP-N-acetyl-alpha-D-muramate + L-alanine + ATP = UDP-N-acetyl-alpha-D-muramoyl-L-alanine + ADP + phosphate + H(+). It participates in cell wall biogenesis; peptidoglycan biosynthesis. Cell wall formation. The polypeptide is UDP-N-acetylmuramate--L-alanine ligase (Listeria monocytogenes serotype 4b (strain F2365)).